The chain runs to 118 residues: Putative pterin-4-alpha-carbinolamine dehydratase (118 aa).

It belongs to the pterin-4-alpha-carbinolamine dehydratase family.

The catalysed reaction is (4aS,6R)-4a-hydroxy-L-erythro-5,6,7,8-tetrahydrobiopterin = (6R)-L-erythro-6,7-dihydrobiopterin + H2O. This is Putative pterin-4-alpha-carbinolamine dehydratase from Pseudomonas paraeruginosa (strain DSM 24068 / PA7) (Pseudomonas aeruginosa (strain PA7)).